We begin with the raw amino-acid sequence, 206 residues long: MEKLYKENEGKPENERNLESEGKPEDEGSTEDEGKSDEEEKPDMEGKTECEGKREDEGEPGDEGQLEDEGNQEKQGKSEGEDKPQSEGKPASQAKPESQPRAAEKRPAEDYVPRKAKRKTDRGTDDSPKDSQEDLQERHLSSEEMMRECGDVSRAQEELRKKQKMGGFHWMQRDVQDPFAPRGQRGVRGVRGGGRGQKDLEDVPYV.

A compositionally biased stretch (basic and acidic residues) spans 1–26 (MEKLYKENEGKPENERNLESEGKPED). The tract at residues 1 to 206 (MEKLYKENEG…QKDLEDVPYV (206 aa)) is disordered. A compositionally biased stretch (acidic residues) spans 27–42 (EGSTEDEGKSDEEEKP). The segment covering 43-56 (DMEGKTECEGKRED) has biased composition (basic and acidic residues). The segment covering 57–70 (EGEPGDEGQLEDEG) has biased composition (acidic residues). 4 stretches are compositionally biased toward basic and acidic residues: residues 71 to 86 (NQEKQGKSEGEDKPQS), 102 to 113 (AAEKRPAEDYVP), 121 to 160 (DRGTDDSPKDSQEDLQERHLSSEEMMRECGDVSRAQEELR), and 196 to 206 (GQKDLEDVPYV).

The protein belongs to the TFS-II family. TFA subfamily.

Its subcellular location is the nucleus. In terms of biological role, may be involved in transcriptional regulation. This Homo sapiens (Human) protein is Transcription elongation factor A protein-like 5 (TCEAL5).